A 369-amino-acid chain; its full sequence is Core histone macro-H2A.1 (369 aa).

Residues Ser2–Lys117 enclose the Histone H2A domain. N6-lactoyllysine; alternate occurs at positions 7 and 9. Lys18 carries the N6-methyllysine modification. Lys116 is modified (N6-acetyllysine; alternate). Residue Lys116 forms a Glycyl lysine isopeptide (Lys-Gly) (interchain with G-Cter in ubiquitin); alternate linkage. Lys117 is covalently cross-linked (Glycyl lysine isopeptide (Lys-Gly) (interchain with G-Cter in ubiquitin)). Lys123 bears the N6-acetyllysine; alternate mark. An N6,N6-dimethyllysine; alternate modification is found at Lys123. Lys123 participates in a covalent cross-link: Glycyl lysine isopeptide (Lys-Gly) (interchain with G-Cter in SUMO2); alternate. Residues Ile128–Thr180 are disordered. Thr129 is subject to Phosphothreonine. Positions Pro144–Lys160 are enriched in basic residues. Lys167 participates in a covalent cross-link: Glycyl lysine isopeptide (Lys-Gly) (interchain with G-Cter in SUMO2). 2 positions are modified to phosphoserine: Ser170 and Ser173. Thr178 carries the post-translational modification Phosphothreonine. Residues Thr184 to Asp367 enclose the Macro domain. Lys189 participates in a covalent cross-link: Glycyl lysine isopeptide (Lys-Gly) (interchain with G-Cter in SUMO2). Asp203, Ile204, Val226, Ser275, Gly312, Ser313, Gly314, and Asn316 together coordinate a glycoprotein. Residue Lys320 forms a Glycyl lysine isopeptide (Lys-Gly) (interchain with G-Cter in SUMO2) linkage.

This sequence belongs to the histone H2A family. As to quaternary structure, the nucleosome is a histone octamer containing two molecules each of H2A, H2B, H3 and H4 assembled in one H3-H4 heterotetramer and two H2A-H2B heterodimers. Interacts with HDAC1 and HDAC2. Interacts with SPOP. Part of a complex consisting of MACROH2A1, CUL3 and SPOP. Interacts with PARP1. In terms of processing, monoubiquitinated at either Lys-116 or Lys-117. May also be polyubiquitinated. Ubiquitination is mediated by the CUL3/SPOP E3 complex and does not promote proteasomal degradation. Instead, it is required for enrichment in inactive X chromosome chromatin. In terms of tissue distribution, widely expressed, with high levels in testis. Present in liver, kidney and adrenal gland (at protein level). In the liver, present in hepatocytes and at a lesser extent in cells of the bile ducts. In the kidney, expressed in proximal and distal convoluted tubules and in straight proximal tubules. In the adrenal gland, present in inner cells of the cortex and medulla.

The protein resides in the nucleus. It is found in the chromosome. Its function is as follows. Variant histone H2A which replaces conventional H2A in a subset of nucleosomes where it represses transcription. Nucleosomes wrap and compact DNA into chromatin, limiting DNA accessibility to the cellular machineries which require DNA as a template. Histones thereby play a central role in transcription regulation, DNA repair, DNA replication and chromosomal stability. DNA accessibility is regulated via a complex set of post-translational modifications of histones, also called histone code, and nucleosome remodeling. Involved in stable X chromosome inactivation. Inhibits the binding of transcription factors, including NF-kappa-B, and interferes with the activity of remodeling SWI/SNF complexes. Inhibits histone acetylation by EP300 and recruits class I HDACs, which induces a hypoacetylated state of chromatin. Isoform that specifically binds poly-ADP-ribose and O-acetyl-ADP-ribose and plays a key role in NAD(+) metabolism. Able to bind to the ends of poly-ADP-ribose chains created by PARP1 and cap them. This prevents PARP1 from further addition of ADP-ribose and thus limits the consumption of nuclear NAD(+), allowing the cell to maintain proper NAD(+) levels in both the nucleus and the mitochondria to promote proper mitochondrial respiration. Increases the expression of genes involved in redox metabolism, including SOD3. In terms of biological role, in contrast to isoform 1, does not bind poly-ADP-ribose. Represses SOD3 gene expression. This chain is Core histone macro-H2A.1, found in Mus musculus (Mouse).